The sequence spans 274 residues: 2,3,4,5-tetrahydropyridine-2,6-dicarboxylate N-succinyltransferase (274 aa).

Arg-104 and Asp-141 together coordinate substrate.

Belongs to the transferase hexapeptide repeat family. In terms of assembly, homotrimer.

It localises to the cytoplasm. The catalysed reaction is (S)-2,3,4,5-tetrahydrodipicolinate + succinyl-CoA + H2O = (S)-2-succinylamino-6-oxoheptanedioate + CoA. It functions in the pathway amino-acid biosynthesis; L-lysine biosynthesis via DAP pathway; LL-2,6-diaminopimelate from (S)-tetrahydrodipicolinate (succinylase route): step 1/3. This Sodalis glossinidius (strain morsitans) protein is 2,3,4,5-tetrahydropyridine-2,6-dicarboxylate N-succinyltransferase.